A 275-amino-acid chain; its full sequence is NH(3)-dependent NAD(+) synthetase (275 aa).

Residue 47–54 (GISGGQDS) participates in ATP binding. Aspartate 53 contacts Mg(2+). Position 141 (arginine 141) interacts with deamido-NAD(+). Threonine 161 is an ATP binding site. Glutamate 166 lines the Mg(2+) pocket. Deamido-NAD(+) is bound by residues lysine 174 and aspartate 181. Positions 190 and 212 each coordinate ATP. 261-262 (HK) is a deamido-NAD(+) binding site.

Belongs to the NAD synthetase family. Homodimer.

It catalyses the reaction deamido-NAD(+) + NH4(+) + ATP = AMP + diphosphate + NAD(+) + H(+). It participates in cofactor biosynthesis; NAD(+) biosynthesis; NAD(+) from deamido-NAD(+) (ammonia route): step 1/1. In terms of biological role, catalyzes the ATP-dependent amidation of deamido-NAD to form NAD. Uses ammonia as a nitrogen source. This Lactiplantibacillus plantarum (strain ATCC BAA-793 / NCIMB 8826 / WCFS1) (Lactobacillus plantarum) protein is NH(3)-dependent NAD(+) synthetase.